The sequence spans 171 residues: MNDSLIFATEGFALNLNLFETNVINLAVVAFGLYKFLPNFLGGMLERRRSAILQDLKDAEDRLAKASESLKQAKLDLSSAEQKAGKIRTDCQARAEAIRLESEKRTVEEMARIKQGAASDLNVEAARVSGQLRREAAKLAIEKALSTLSGKLDDKAQDKFLKQSIKNIGDI.

The helical transmembrane segment at 12–34 (FALNLNLFETNVINLAVVAFGLY) threads the bilayer.

This sequence belongs to the ATPase B chain family. In terms of assembly, F-type ATPases have 2 components, F(1) - the catalytic core - and F(0) - the membrane proton channel. F(1) has five subunits: alpha(3), beta(3), gamma(1), delta(1), epsilon(1). F(0) has four main subunits: a(1), b(1), b'(1) and c(10-14). The alpha and beta chains form an alternating ring which encloses part of the gamma chain. F(1) is attached to F(0) by a central stalk formed by the gamma and epsilon chains, while a peripheral stalk is formed by the delta, b and b' chains.

Its subcellular location is the cellular thylakoid membrane. F(1)F(0) ATP synthase produces ATP from ADP in the presence of a proton or sodium gradient. F-type ATPases consist of two structural domains, F(1) containing the extramembraneous catalytic core and F(0) containing the membrane proton channel, linked together by a central stalk and a peripheral stalk. During catalysis, ATP synthesis in the catalytic domain of F(1) is coupled via a rotary mechanism of the central stalk subunits to proton translocation. Functionally, component of the F(0) channel, it forms part of the peripheral stalk, linking F(1) to F(0). The polypeptide is ATP synthase subunit b (Prochlorococcus marinus (strain SARG / CCMP1375 / SS120)).